A 143-amino-acid chain; its full sequence is MSNDFKVIINGQNIDNGQKIIFEKSQDVPKPIFDIGDNEYYTIAMVDPDAPSRENPIYKYFLHMLIVNNYQTLVSFQPPSPPKGSGYHRYFFFLLKQPKYIDQNIWKQQINNNSIRREKFNLSEFISDNKLTVIASTYFKTKR.

This sequence belongs to the phosphatidylethanolamine-binding protein family.

It localises to the virion. In Acanthamoeba polyphaga mimivirus (APMV), this protein is Phosphatidylethanolamine-binding protein homolog R644.